Consider the following 430-residue polypeptide: Serine--tRNA ligase (430 aa).

236–238 (TAE) is an L-serine binding site. 267–269 (RSE) contacts ATP. An L-serine-binding site is contributed by E290. Residue 354 to 357 (EISS) participates in ATP binding. S390 serves as a coordination point for L-serine.

This sequence belongs to the class-II aminoacyl-tRNA synthetase family. Type-1 seryl-tRNA synthetase subfamily. In terms of assembly, homodimer. The tRNA molecule binds across the dimer.

Its subcellular location is the cytoplasm. The enzyme catalyses tRNA(Ser) + L-serine + ATP = L-seryl-tRNA(Ser) + AMP + diphosphate + H(+). It catalyses the reaction tRNA(Sec) + L-serine + ATP = L-seryl-tRNA(Sec) + AMP + diphosphate + H(+). The protein operates within aminoacyl-tRNA biosynthesis; selenocysteinyl-tRNA(Sec) biosynthesis; L-seryl-tRNA(Sec) from L-serine and tRNA(Sec): step 1/1. Its function is as follows. Catalyzes the attachment of serine to tRNA(Ser). Is also able to aminoacylate tRNA(Sec) with serine, to form the misacylated tRNA L-seryl-tRNA(Sec), which will be further converted into selenocysteinyl-tRNA(Sec). The sequence is that of Serine--tRNA ligase from Mannheimia succiniciproducens (strain KCTC 0769BP / MBEL55E).